Consider the following 266-residue polypeptide: Undecaprenyl-diphosphatase (266 aa).

A run of 8 helical transmembrane segments spans residues 2 to 22 (INIL…FLPI), 39 to 59 (LPII…IIYY), 86 to 106 (LKLI…GTFI), 112 to 132 (MFIL…ILML), 145 to 165 (ILLV…PGIS), 184 to 204 (AFEI…LFKY), 212 to 232 (MVLN…VGII), and 246 to 266 (LYYF…FFRI).

This sequence belongs to the UppP family.

It localises to the cell inner membrane. The enzyme catalyses di-trans,octa-cis-undecaprenyl diphosphate + H2O = di-trans,octa-cis-undecaprenyl phosphate + phosphate + H(+). Its function is as follows. Catalyzes the dephosphorylation of undecaprenyl diphosphate (UPP). Confers resistance to bacitracin. The sequence is that of Undecaprenyl-diphosphatase from Borrelia garinii subsp. bavariensis (strain ATCC BAA-2496 / DSM 23469 / PBi) (Borreliella bavariensis).